The following is a 391-amino-acid chain: Homocysteine-responsive endoplasmic reticulum-resident ubiquitin-like domain member 1 protein (391 aa).

Met1 is modified (N-acetylmethionine). The Cytoplasmic portion of the chain corresponds to 1 to 263 (MEPEPQPEPV…VEEDDEINRD (263 aa)). The Ubiquitin-like domain maps to 10–72 (VTLLVKSPNQ…LLDHQCLQDL (63 aa)). The segment at 90–126 (NPSKMPETSTKGAESTEQPDNSNQTQHPGDSSSDGLR) is disordered. A compositionally biased stretch (polar residues) spans 95 to 124 (PETSTKGAESTEQPDNSNQTQHPGDSSSDG). The segment at 115–200 (QHPGDSSSDG…ASGTFVPTPS (86 aa)) is interaction with UBQLN1. Phosphoserine is present on Ser135. A helical membrane pass occupies residues 264–284 (WLDWTYSAATFSVFLSILYFY). Residues 285–289 (SSLSR) lie on the Lumenal side of the membrane. A helical membrane pass occupies residues 290 to 310 (FLMVMGATVVMYLHHVGWFPF). The Cytoplasmic portion of the chain corresponds to 311–391 (RQRPVQNFPD…LPEGPPALAN (81 aa)). The segment at 317 to 361 (NFPDDGGPRDAANQDPNNNLQGGMDPEMEDPNRLPPDREVLDPEH) is disordered. The span at 346–361 (DPNRLPPDREVLDPEH) shows a compositional bias: basic and acidic residues.

As to quaternary structure, interacts with PSEN1 and PSEN2. Interacts with UBXN6. Interacts with UBQLN1, UBQLN2 and UBQLN4. Component of the HRD1 complex, which comprises at least SYNV1/HRD1, FAM8A1, HERPUD1/HERP, OS9, SEL1L and UBE2J1. FAM8A1 binding to SYNV1 may promote recruitment of HERPUD1 to the HRD1 complex.

Its subcellular location is the endoplasmic reticulum membrane. Functionally, component of the endoplasmic reticulum quality control (ERQC) system also called ER-associated degradation (ERAD) involved in ubiquitin-dependent degradation of misfolded endoplasmic reticulum proteins. Binds to ubiquilins and this interaction is required for efficient degradation of CD3D via the ERAD pathway. In Mus musculus (Mouse), this protein is Homocysteine-responsive endoplasmic reticulum-resident ubiquitin-like domain member 1 protein (Herpud1).